The sequence spans 431 residues: Phosphoribosylamine--glycine ligase (431 aa).

In terms of domain architecture, ATP-grasp spans Lys-109 to Asp-316. Val-135–Ser-196 contacts ATP. Positions 286 and 288 each coordinate Mg(2+).

This sequence belongs to the GARS family. Mg(2+) serves as cofactor. The cofactor is Mn(2+).

The catalysed reaction is 5-phospho-beta-D-ribosylamine + glycine + ATP = N(1)-(5-phospho-beta-D-ribosyl)glycinamide + ADP + phosphate + H(+). The protein operates within purine metabolism; IMP biosynthesis via de novo pathway; N(1)-(5-phospho-D-ribosyl)glycinamide from 5-phospho-alpha-D-ribose 1-diphosphate: step 2/2. The protein is Phosphoribosylamine--glycine ligase of Xanthomonas axonopodis pv. citri (strain 306).